Here is a 343-residue protein sequence, read N- to C-terminus: TATA box-binding protein-like 2 (343 aa).

The disordered stretch occupies residues 71–152 (PDEVTQENKD…SDSLSLASIT (82 aa)). Residues 76 to 90 (QENKDQPVISKHETE) are compositionally biased toward basic and acidic residues. Residues 94–127 (ESQSPQSRLPSPSEQDVGLGLNSSSLSNSHSQLH) are compositionally biased toward low complexity. Residues 143 to 152 (SDSLSLASIT) are compositionally biased toward polar residues.

This sequence belongs to the TBP family. As to quaternary structure, interacts with TAF3. In terms of tissue distribution, ubiquitously expressed in all tissues examined with highest levels in heart, lung, ovary, spleen and testes.

It is found in the cytoplasm. It localises to the nucleus. Transcription factor required in complex with TAF3 for the differentiation of myoblasts into myocytes. The complex replaces TFIID at specific promoters at an early stage in the differentiation process. The protein is TATA box-binding protein-like 2 of Homo sapiens (Human).